The sequence spans 612 residues: Chaperone protein DnaK (612 aa).

A Phosphothreonine; by autocatalysis modification is found at threonine 173. The disordered stretch occupies residues 576 to 612; it reads AAKAQQAEGGANAEGKKADDNVVDAEYEEVKDDETKK. The span at 578–588 shows a compositional bias: low complexity; sequence KAQQAEGGANA. Acidic residues predominate over residues 596–612; the sequence is NVVDAEYEEVKDDETKK.

It belongs to the heat shock protein 70 family.

Its function is as follows. Acts as a chaperone. This is Chaperone protein DnaK from Bacillus velezensis (strain DSM 23117 / BGSC 10A6 / LMG 26770 / FZB42) (Bacillus amyloliquefaciens subsp. plantarum).